The primary structure comprises 757 residues: Cellulose synthase-like protein B2 (757 aa).

2 consecutive transmembrane segments (helical) span residues Ala24–Met44 and Gly48–Ser68. Catalysis depends on residues Asp136 and Asp461. 6 helical membrane-spanning segments follow: residues Ala533 to Tyr555, Leu568 to Phe588, Ile607 to Leu627, Phe672 to Gly692, Gly704 to Leu724, and Ile735 to Val755.

It belongs to the glycosyltransferase 2 family. Plant cellulose synthase-like B subfamily. As to expression, expressed in young seedlings, primarily in the root vascular tissue.

It is found in the golgi apparatus membrane. Thought to be a Golgi-localized beta-glycan synthase that polymerize the backbones of noncellulosic polysaccharides (hemicelluloses) of plant cell wall. The chain is Cellulose synthase-like protein B2 (CSLB2) from Arabidopsis thaliana (Mouse-ear cress).